A 345-amino-acid chain; its full sequence is L-Ala-D/L-Glu epimerase (345 aa).

Substrate contacts are provided by Thr-134 and Lys-159. Catalysis depends on Lys-161, which acts as the Proton acceptor; specific for (R)-substrate epimerization. Asp-188 contributes to the Mg(2+) binding site. Asn-190 lines the substrate pocket. Mg(2+) contacts are provided by Glu-216 and Asp-241. Residue Lys-265 is the Proton acceptor; specific for (S)-substrate epimerization of the active site. 3 residues coordinate substrate: Cys-292, Asp-317, and Asp-319.

Belongs to the mandelate racemase/muconate lactonizing enzyme family. Mg(2+) is required as a cofactor.

It carries out the reaction L-alanyl-L-glutamate = L-alanyl-D-glutamate. It participates in cell wall degradation; peptidoglycan degradation. Catalyzes the epimerization of L-Ala-D-Glu to L-Ala-L-Glu and has probably a role in the metabolism of the murein peptide, of which L-Ala-D-Glu is a component. Is also able to catalyze the reverse reaction and the epimerization of a broad range of other dipeptides; is most efficient with L-Ala-D/L-Phe, L-Ala-D/L-Tyr, and L-Ala-D/L-His. The polypeptide is L-Ala-D/L-Glu epimerase (Thermotoga maritima (strain ATCC 43589 / DSM 3109 / JCM 10099 / NBRC 100826 / MSB8)).